The sequence spans 298 residues: MNIKDLTTEQRNPKSLHIDSATPLEIVKIINQEDKKIADAVGTQDKEIAKAIEYASKRYREGGRLIYVGAGTSGRLGILDAVELVPTYRINPERAIGLIAGGQSAMFRAVEGAEDDLQLGEKDLKDLKLNEKDIVIGLAASGRTPYVIGCLKYANQVKALTISIACVKKSEIGKYADIAIEAVVGPEVITGSTRMKAGTAQKMILNMISTGVMIKQGKVYENVMVDVMPTNSKLVDRACRIIEVATGVSESVASDTLEKADMNVAVAITMLKTGVDKEKAMDILKECNGNISSVVNNY.

Residues 55 to 218 form the SIS domain; it reads ASKRYREGGR…STGVMIKQGK (164 aa). Catalysis depends on E83, which acts as the Proton donor. Residue E114 is part of the active site.

The protein belongs to the GCKR-like family. MurNAc-6-P etherase subfamily. As to quaternary structure, homodimer.

It catalyses the reaction N-acetyl-D-muramate 6-phosphate + H2O = N-acetyl-D-glucosamine 6-phosphate + (R)-lactate. Its pathway is amino-sugar metabolism; N-acetylmuramate degradation. In terms of biological role, specifically catalyzes the cleavage of the D-lactyl ether substituent of MurNAc 6-phosphate, producing GlcNAc 6-phosphate and D-lactate. This chain is N-acetylmuramic acid 6-phosphate etherase, found in Lactobacillus johnsonii (strain CNCM I-12250 / La1 / NCC 533).